A 355-amino-acid polypeptide reads, in one-letter code: Vacuolar protein sorting-associated protein 37C (355 aa).

S29 carries the post-translational modification Phosphoserine. The 90-residue stretch at 78 to 167 (VERCQEQKAK…RKPRASQELA (90 aa)) folds into the VPS37 C-terminal domain. The interval 159–355 (KPRASQELAG…PPPGPAWPGY (197 aa)) is disordered. Pro residues-rich tracts occupy residues 170–186 (APPPRPPPPVRPVPQGT) and 194–214 (PQPPLAMPPYPLPYSPSPSLP). Positions 291-304 (APSPGYPQQSPYPA) are enriched in low complexity. Residues 321–355 (PGQPQPSVPLQPPYPPGPAPPYGFPPPPGPAWPGY) show a composition bias toward pro residues.

The protein belongs to the VPS37 family. Component of the ESCRT-I complex (endosomal sorting complex required for transport I) which consists of TSG101, VPS28, a VPS37 protein (VPS37A to -D) and MVB12A or MVB12B in a 1:1:1:1 stoichiometry. Interacts with TSG101, VPS28, MVB12A and MVB12B. Component of the ESCRT-I complex (endosomal sorting complex required for transport I) which consists of TSG101, VPS28, a VPS37 protein (VPS37A to -D) and UBAP1 in a 1:1:1:1 stoichiometry. Interacts with HGS and STAM2. Interacts with CEP55. Phosphorylated by TBK1.

It localises to the late endosome membrane. Its function is as follows. Component of the ESCRT-I complex, a regulator of vesicular trafficking process. Required for the sorting of endocytic ubiquitinated cargos into multivesicular bodies. May be involved in cell growth and differentiation. The chain is Vacuolar protein sorting-associated protein 37C (VPS37C) from Homo sapiens (Human).